A 119-amino-acid chain; its full sequence is Large ribosomal subunit protein bL20 (119 aa).

Belongs to the bacterial ribosomal protein bL20 family.

Its function is as follows. Binds directly to 23S ribosomal RNA and is necessary for the in vitro assembly process of the 50S ribosomal subunit. It is not involved in the protein synthesizing functions of that subunit. This is Large ribosomal subunit protein bL20 from Metamycoplasma arthritidis (strain 158L3-1) (Mycoplasma arthritidis).